The sequence spans 248 residues: Ribosomal RNA small subunit methyltransferase J (248 aa).

Residues 98–99, 114–115, 150–151, and D168 each bind S-adenosyl-L-methionine; these read RD, ER, and SS.

It belongs to the methyltransferase superfamily. RsmJ family.

It is found in the cytoplasm. It carries out the reaction guanosine(1516) in 16S rRNA + S-adenosyl-L-methionine = N(2)-methylguanosine(1516) in 16S rRNA + S-adenosyl-L-homocysteine + H(+). Its function is as follows. Specifically methylates the guanosine in position 1516 of 16S rRNA. The polypeptide is Ribosomal RNA small subunit methyltransferase J (Shewanella baltica (strain OS223)).